The sequence spans 340 residues: Heat-inducible transcription repressor HrcA (340 aa).

This sequence belongs to the HrcA family.

Negative regulator of class I heat shock genes (grpE-dnaK-dnaJ and groELS operons). Prevents heat-shock induction of these operons. In Burkholderia cenocepacia (strain ATCC BAA-245 / DSM 16553 / LMG 16656 / NCTC 13227 / J2315 / CF5610) (Burkholderia cepacia (strain J2315)), this protein is Heat-inducible transcription repressor HrcA.